The primary structure comprises 191 residues: Small ribosomal subunit protein eS7y (191 aa).

N-acetylmethionine is present on Met-1. The stretch at 17–50 (TEFEEQVTQALFDLENTNQELKSELKDLYINQAV) forms a coiled coil.

The protein belongs to the eukaryotic ribosomal protein eS7 family.

In Arabidopsis thaliana (Mouse-ear cress), this protein is Small ribosomal subunit protein eS7y (RPS7B).